The following is a 398-amino-acid chain: tRNA(Ile)-lysidine synthase (398 aa).

An ATP-binding site is contributed by 25–30 (SGGVDS).

Belongs to the tRNA(Ile)-lysidine synthase family.

The protein localises to the cytoplasm. The catalysed reaction is cytidine(34) in tRNA(Ile2) + L-lysine + ATP = lysidine(34) in tRNA(Ile2) + AMP + diphosphate + H(+). Functionally, ligates lysine onto the cytidine present at position 34 of the AUA codon-specific tRNA(Ile) that contains the anticodon CAU, in an ATP-dependent manner. Cytidine is converted to lysidine, thus changing the amino acid specificity of the tRNA from methionine to isoleucine. In Francisella tularensis subsp. holarctica (strain OSU18), this protein is tRNA(Ile)-lysidine synthase.